Reading from the N-terminus, the 477-residue chain is Ribulose bisphosphate carboxylase large chain (477 aa).

The propeptide occupies methionine 1 to serine 2. Position 3 is an N-acetylproline (proline 3). Lysine 14 carries the N6,N6,N6-trimethyllysine modification. Substrate-binding residues include asparagine 123 and threonine 173. Residue lysine 175 is the Proton acceptor of the active site. Lysine 177 contributes to the substrate binding site. Residues lysine 201, aspartate 203, and glutamate 204 each contribute to the Mg(2+) site. An N6-carboxylysine modification is found at lysine 201. The Proton acceptor role is filled by histidine 294. Residues arginine 295, histidine 327, and serine 379 each contribute to the substrate site.

Belongs to the RuBisCO large chain family. Type I subfamily. In terms of assembly, heterohexadecamer of 8 large chains and 8 small chains; disulfide-linked. The disulfide link is formed within the large subunit homodimers. Mg(2+) is required as a cofactor. In terms of processing, the disulfide bond which can form in the large chain dimeric partners within the hexadecamer appears to be associated with oxidative stress and protein turnover.

The protein resides in the plastid. Its subcellular location is the chloroplast. The enzyme catalyses 2 (2R)-3-phosphoglycerate + 2 H(+) = D-ribulose 1,5-bisphosphate + CO2 + H2O. It carries out the reaction D-ribulose 1,5-bisphosphate + O2 = 2-phosphoglycolate + (2R)-3-phosphoglycerate + 2 H(+). RuBisCO catalyzes two reactions: the carboxylation of D-ribulose 1,5-bisphosphate, the primary event in carbon dioxide fixation, as well as the oxidative fragmentation of the pentose substrate in the photorespiration process. Both reactions occur simultaneously and in competition at the same active site. The chain is Ribulose bisphosphate carboxylase large chain from Atropa belladonna (Belladonna).